Consider the following 407-residue polypeptide: uncharacterized protein (407 aa).

2 disordered regions span residues 1-62 (MTGR…NGDP) and 350-379 (SVTP…KPSS). The span at 17–30 (PVEKMPRFQREHGA) shows a compositional bias: basic and acidic residues.

This is an uncharacterized protein from Ictaluridae (bullhead catfishes).